The sequence spans 163 residues: D-aminoacyl-tRNA deacylase (163 aa).

Residues 141-142 (GP) carry the Gly-cisPro motif, important for rejection of L-amino acids motif.

This sequence belongs to the DTD family. As to quaternary structure, homodimer.

The protein localises to the cytoplasm. The catalysed reaction is glycyl-tRNA(Ala) + H2O = tRNA(Ala) + glycine + H(+). It catalyses the reaction a D-aminoacyl-tRNA + H2O = a tRNA + a D-alpha-amino acid + H(+). Its function is as follows. An aminoacyl-tRNA editing enzyme that deacylates mischarged D-aminoacyl-tRNAs. Also deacylates mischarged glycyl-tRNA(Ala), protecting cells against glycine mischarging by AlaRS. Acts via tRNA-based rather than protein-based catalysis; rejects L-amino acids rather than detecting D-amino acids in the active site. By recycling D-aminoacyl-tRNA to D-amino acids and free tRNA molecules, this enzyme counteracts the toxicity associated with the formation of D-aminoacyl-tRNA entities in vivo and helps enforce protein L-homochirality. The protein is D-aminoacyl-tRNA deacylase of Neisseria meningitidis serogroup B (strain ATCC BAA-335 / MC58).